The primary structure comprises 84 residues: Exodeoxyribonuclease 7 small subunit (84 aa).

It belongs to the XseB family. Heterooligomer composed of large and small subunits.

The protein resides in the cytoplasm. The enzyme catalyses Exonucleolytic cleavage in either 5'- to 3'- or 3'- to 5'-direction to yield nucleoside 5'-phosphates.. Functionally, bidirectionally degrades single-stranded DNA into large acid-insoluble oligonucleotides, which are then degraded further into small acid-soluble oligonucleotides. The polypeptide is Exodeoxyribonuclease 7 small subunit (Haemophilus influenzae (strain ATCC 51907 / DSM 11121 / KW20 / Rd)).